The chain runs to 149 residues: Deoxyuridine 5'-triphosphate nucleotidohydrolase (149 aa).

Residues 68-70 (RSG), asparagine 81, and 85-87 (LID) contribute to the substrate site.

This sequence belongs to the dUTPase family. Mg(2+) is required as a cofactor.

It catalyses the reaction dUTP + H2O = dUMP + diphosphate + H(+). It participates in pyrimidine metabolism; dUMP biosynthesis; dUMP from dCTP (dUTP route): step 2/2. In terms of biological role, this enzyme is involved in nucleotide metabolism: it produces dUMP, the immediate precursor of thymidine nucleotides and it decreases the intracellular concentration of dUTP so that uracil cannot be incorporated into DNA. The sequence is that of Deoxyuridine 5'-triphosphate nucleotidohydrolase from Nitrosomonas eutropha (strain DSM 101675 / C91 / Nm57).